Consider the following 692-residue polypeptide: Vacuolar amino acid transporter 3 (692 aa).

A compositionally biased stretch (polar residues) spans 1 to 14 (MNGKEVSSGSGRTQ). Positions 1–71 (MNGKEVSSGS…TGGLLKKPPL (71 aa)) are disordered. The segment covering 15–24 (SNNNKKNNNG) has biased composition (low complexity). Polar residues predominate over residues 28–38 (GISHASGSPLT). S59, S119, and S121 each carry phosphoserine. 2 disordered regions span residues 135 to 170 (KWTN…SNRK) and 258 to 294 (DLSE…GRHP). Positions 141 to 153 (PSSPSQYQYPSQP) are enriched in low complexity. Positions 154-167 (ALSTSIPSQAPSFS) are enriched in polar residues. S165 carries the phosphoserine modification. Over residues 258–279 (DLSEEEEEEEETEEEPEEEALE) the composition is skewed to acidic residues. 11 consecutive transmembrane segments (helical) span residues 302-322 (AVLL…PKAF), 329-349 (FSAL…VSLI), 374-394 (FAIL…YTVF), 412-432 (GSIS…PLSL), 443-463 (ALIA…YSIY), 483-503 (WSLF…LIPI), 519-539 (AVMC…YAAF), 561-581 (VQLL…FPAI), 607-627 (YFRC…ANDL), 630-650 (FVSL…PPLL), and 665-685 (LLLD…TSWQ).

This sequence belongs to the amino acid/polyamine transporter 2 family.

The protein localises to the vacuole membrane. In terms of biological role, involved in amino acid efflux from the vacuole to the cytoplasm. Capable of transporting large neutral amino acids including tyrosine, glutamine, asparagine, isoleucine and leucine. This Saccharomyces cerevisiae (strain ATCC 204508 / S288c) (Baker's yeast) protein is Vacuolar amino acid transporter 3 (AVT3).